Reading from the N-terminus, the 100-residue chain is Elicitin Vex2 (100 aa).

3 cysteine pairs are disulfide-bonded: C3/C71, C27/C56, and C51/C95.

Belongs to the elicitin family.

It localises to the secreted. Functionally, induces local and distal defense responses (incompatible hypersensitive reaction) in plants from the solanaceae and cruciferae families. Elicits leaf necrosis and causes the accumulation of pathogenesis-related proteins. Might interact with the lipidic molecules of the plasma membrane. The sequence is that of Elicitin Vex2 from Phytopythium vexans (Damping-off fungus).